The sequence spans 145 residues: MRQTFMANESNIERKWYVIDAEGKTLGRLSSEVAAILRGKNKVTYTPHVDTGDYVIVINASKIHFTGNKERDKMYYRHSNHPGGIKSISAGELKANNPERLLENSIKGMLPSTRLGEKQGKKLFVYGGAEHPHTAQQPENYELRG.

This sequence belongs to the universal ribosomal protein uL13 family. Part of the 50S ribosomal subunit.

In terms of biological role, this protein is one of the early assembly proteins of the 50S ribosomal subunit, although it is not seen to bind rRNA by itself. It is important during the early stages of 50S assembly. This chain is Large ribosomal subunit protein uL13, found in Staphylococcus saprophyticus subsp. saprophyticus (strain ATCC 15305 / DSM 20229 / NCIMB 8711 / NCTC 7292 / S-41).